The primary structure comprises 355 residues: N-acylethanolamine-hydrolyzing acid amidase (355 aa).

The first 17 residues, 1–17, serve as a signal peptide directing secretion; it reads MLLLQIILLLLPVICSA. Residue cysteine 122 is the Nucleophile of the active site. N-linked (GlcNAc...) asparagine glycans are attached at residues asparagine 150, asparagine 160, and asparagine 328.

Belongs to the acid ceramidase family. As to quaternary structure, heterodimer of an alpha and a beta subunit, produced by autocatalytic cleavage. N-glycosylated. In terms of processing, autoproteolytic cleavage at pH 4.5 gives rise to the alpha and beta subunit. Cleavage gives rise to a conformation change that activates the enzyme. The same catalytic Cys residue mediates the autoproteolytic cleavage and subsequent hydrolysis of lipid substrates.

The protein resides in the lysosome. The protein localises to the membrane. It carries out the reaction N-hexadecanoylethanolamine + H2O = ethanolamine + hexadecanoate. The catalysed reaction is an N-(long-chain fatty acyl)ethanolamine + H2O = a long-chain fatty acid + ethanolamine. It functions in the pathway lipid metabolism; fatty acid metabolism. In terms of biological role, degrades bioactive fatty acid amides, such as N-palmitoylethanolamine, to ethanolamine and free fatty acids. The polypeptide is N-acylethanolamine-hydrolyzing acid amidase (Caenorhabditis elegans).